The chain runs to 91 residues: Non-specific lipid-transfer protein 1 (91 aa).

Intrachain disulfides connect C4–C51, C14–C28, C29–C74, and C49–C88.

As to expression, detected in seeds (at protein level).

Plant non-specific lipid-transfer proteins transfer phospholipids as well as galactolipids across membranes. May play a role in wax or cutin deposition in the cell walls of expanding epidermal cells and certain secretory tissues. The polypeptide is Non-specific lipid-transfer protein 1 (Trachyspermum ammi (Ajowan caraway)).